The sequence spans 256 residues: Protein FixA (256 aa).

It belongs to the ETF beta-subunit/FixA family. As to quaternary structure, heterodimer of FixA and FixB.

It participates in amine and polyamine metabolism; carnitine metabolism. Required for anaerobic carnitine reduction. May bring reductant to CaiA. The protein is Protein FixA of Escherichia coli O7:K1 (strain IAI39 / ExPEC).